Here is a 242-residue protein sequence, read N- to C-terminus: Type III pantothenate kinase (242 aa).

7–14 contacts ATP; sequence DLGNSRFK. Residues Y91 and 98-101 contribute to the substrate site; that span reads GVDR. D100 serves as the catalytic Proton acceptor. An ATP-binding site is contributed by T121. A substrate-binding site is contributed by T171.

This sequence belongs to the type III pantothenate kinase family. As to quaternary structure, homodimer. Requires NH4(+) as cofactor. The cofactor is K(+).

Its subcellular location is the cytoplasm. The enzyme catalyses (R)-pantothenate + ATP = (R)-4'-phosphopantothenate + ADP + H(+). It participates in cofactor biosynthesis; coenzyme A biosynthesis; CoA from (R)-pantothenate: step 1/5. In terms of biological role, catalyzes the phosphorylation of pantothenate (Pan), the first step in CoA biosynthesis. This Xanthomonas euvesicatoria pv. vesicatoria (strain 85-10) (Xanthomonas campestris pv. vesicatoria) protein is Type III pantothenate kinase.